Here is a 277-residue protein sequence, read N- to C-terminus: NADPH-dependent 7-cyano-7-deazaguanine reductase (277 aa).

Substrate is bound at residue 83–85 (IES). 85–86 (SK) lines the NADPH pocket. The Thioimide intermediate role is filled by Cys-184. The active-site Proton donor is the Asp-191. 223 to 224 (HE) is a substrate binding site. 252–253 (RG) contributes to the NADPH binding site.

Belongs to the GTP cyclohydrolase I family. QueF type 2 subfamily. In terms of assembly, homodimer.

It is found in the cytoplasm. The enzyme catalyses 7-aminomethyl-7-carbaguanine + 2 NADP(+) = 7-cyano-7-deazaguanine + 2 NADPH + 3 H(+). Its pathway is tRNA modification; tRNA-queuosine biosynthesis. Its function is as follows. Catalyzes the NADPH-dependent reduction of 7-cyano-7-deazaguanine (preQ0) to 7-aminomethyl-7-deazaguanine (preQ1). The polypeptide is NADPH-dependent 7-cyano-7-deazaguanine reductase (Cupriavidus necator (strain ATCC 17699 / DSM 428 / KCTC 22496 / NCIMB 10442 / H16 / Stanier 337) (Ralstonia eutropha)).